Consider the following 44-residue polypeptide: Defensin ARD1 (44 aa).

Disulfide bonds link Cys7–Cys32, Cys18–Cys40, and Cys22–Cys42.

The protein resides in the secreted. Functionally, possesses potent anti-fungal activity. This Archaeoprepona demophon (One-spotted leafwing butterfly) protein is Defensin ARD1.